A 301-amino-acid chain; its full sequence is Very-long-chain aldehyde decarbonylase GL1-10 (301 aa).

3 helical membrane passes run 36–56 (VLFW…PLPV), 94–114 (FFLV…MVGI), and 187–207 (SFVG…WIVL). The Fatty acid hydroxylase domain occupies 131–265 (LVYFLVEDYL…FTYCDYLYGT (135 aa)).

The protein belongs to the sterol desaturase family. In terms of assembly, homodimer. As to expression, expressed ubiquitously.

The protein localises to the endoplasmic reticulum membrane. The catalysed reaction is a long-chain fatty aldehyde + 2 NADPH + O2 + H(+) = a long-chain alkane + formate + 2 NADP(+) + H2O. Its function is as follows. Aldehyde decarbonylase involved in the conversion of aldehydes to alkanes. Core component of a very-long-chain alkane synthesis complex. This Oryza sativa subsp. japonica (Rice) protein is Very-long-chain aldehyde decarbonylase GL1-10.